The chain runs to 193 residues: Large ribosomal subunit protein uL5 (193 aa).

Belongs to the universal ribosomal protein uL5 family. Part of the 50S ribosomal subunit; part of the 5S rRNA/L5/L18/L25 subcomplex. Contacts the 5S rRNA and the P site tRNA. Forms a bridge to the 30S subunit in the 70S ribosome.

In terms of biological role, this is one of the proteins that bind and probably mediate the attachment of the 5S RNA into the large ribosomal subunit, where it forms part of the central protuberance. In the 70S ribosome it contacts protein S13 of the 30S subunit (bridge B1b), connecting the 2 subunits; this bridge is implicated in subunit movement. Contacts the P site tRNA; the 5S rRNA and some of its associated proteins might help stabilize positioning of ribosome-bound tRNAs. The sequence is that of Large ribosomal subunit protein uL5 from Renibacterium salmoninarum (strain ATCC 33209 / DSM 20767 / JCM 11484 / NBRC 15589 / NCIMB 2235).